The sequence spans 450 residues: Na(+)/H(+) antiporter NhaA 1 (450 aa).

A run of 11 helical transmembrane segments spans residues 35-55 (SSLFLLFATIIALWWANSDYA), 79-99 (LKHIINDGLMVIFFFLLGLEI), 117-137 (LIICAMGGMVCPALIYSGFNW), 143-163 (IGWGIPMATDTAFALGVLTMV), 173-193 (AFIVGLAIVDDVGAILVIAIF), 198-218 (ISLMHLLSACALIGFLGVANY), 224-244 (PLFYFIIGVAAWWAMLKSGVH), 320-340 (LPVVLFILPLFALANAGVVIN), 356-376 (IISGLILGKLIGISGACWFAL), 392-412 (VIGASLIAGIGFTMSTFIATL), and 423-443 (VAKTSILLASVLTAILGLLYL).

It belongs to the NhaA Na(+)/H(+) (TC 2.A.33) antiporter family.

It localises to the cell inner membrane. The enzyme catalyses Na(+)(in) + 2 H(+)(out) = Na(+)(out) + 2 H(+)(in). Na(+)/H(+) antiporter that extrudes sodium in exchange for external protons. This is Na(+)/H(+) antiporter NhaA 1 from Shewanella denitrificans (strain OS217 / ATCC BAA-1090 / DSM 15013).